A 196-amino-acid polypeptide reads, in one-letter code: Putative NADH dehydrogenase/NAD(P)H nitroreductase XCV0587 (196 aa).

Belongs to the nitroreductase family. HadB/RutE subfamily. It depends on FMN as a cofactor.

The sequence is that of Putative NADH dehydrogenase/NAD(P)H nitroreductase XCV0587 from Xanthomonas euvesicatoria pv. vesicatoria (strain 85-10) (Xanthomonas campestris pv. vesicatoria).